The primary structure comprises 81 residues: Photosystem I iron-sulfur center (81 aa).

4Fe-4S ferredoxin-type domains follow at residues 2–31 and 39–68; these read SHSVRVYDTCIGCTQCVRACPCDVLEMVPW and IASAPRAEDCIGCKRCETACPTDFLSVRVY. [4Fe-4S] cluster-binding residues include C11, C14, C17, C21, C48, C51, C54, and C58.

As to quaternary structure, the eukaryotic PSI reaction center is composed of at least 11 subunits. The cofactor is [4Fe-4S] cluster.

The protein resides in the plastid. The protein localises to the chloroplast thylakoid membrane. It carries out the reaction reduced [plastocyanin] + hnu + oxidized [2Fe-2S]-[ferredoxin] = oxidized [plastocyanin] + reduced [2Fe-2S]-[ferredoxin]. In terms of biological role, apoprotein for the two 4Fe-4S centers FA and FB of photosystem I (PSI); essential for photochemical activity. FB is the terminal electron acceptor of PSI, donating electrons to ferredoxin. The C-terminus interacts with PsaA/B/D and helps assemble the protein into the PSI complex. Required for binding of PsaD and PsaE to PSI. PSI is a plastocyanin/cytochrome c6-ferredoxin oxidoreductase, converting photonic excitation into a charge separation, which transfers an electron from the donor P700 chlorophyll pair to the spectroscopically characterized acceptors A0, A1, FX, FA and FB in turn. The polypeptide is Photosystem I iron-sulfur center (Emiliania huxleyi (Coccolithophore)).